A 1697-amino-acid polypeptide reads, in one-letter code: Neurexin-3a (1697 aa).

The N-terminal stretch at 1–23 (MNFFRFPVQLQLLISTVLGPCLG) is a signal peptide. One can recognise a Laminin G-like 1 domain in the interval 24 to 198 (LEFTGLQGQW…RVRMDIEGIC (175 aa)). Residues 24–1622 (LEFTGLQGQW…EVVRESSSTT (1599 aa)) are Extracellular-facing. Residues 194 to 231 (IEGICMENPCENGGTCSVVDGEPLCDCSKTEYVGRFCN) form the EGF-like 1 domain. 3 disulfides stabilise this stretch: cysteine 198–cysteine 209, cysteine 203–cysteine 218, and cysteine 220–cysteine 230. Laminin G-like domains are found at residues 258–455 (VATF…VFKC) and 462–654 (DPIS…KPSC). Residues aspartate 304, leucine 321, and methionine 389 each contribute to the Ca(2+) site. Intrachain disulfides connect cysteine 419-cysteine 455, cysteine 625-cysteine 654, cysteine 662-cysteine 673, cysteine 667-cysteine 682, and cysteine 684-cysteine 694. Positions 658 to 695 (SGKQCDSYPCKNKGLCKEGWNRFICDCTGTGYWSRTCE) constitute an EGF-like 2 domain. Laminin G-like domains follow at residues 700–872 (ILSY…IDFC) and 886–1061 (DPVT…ERGC). 4 disulfide bridges follow: cysteine 1033–cysteine 1061, cysteine 1077–cysteine 1088, cysteine 1082–cysteine 1097, and cysteine 1099–cysteine 1109. The region spanning 1073-1110 (PSTTCQEDSCANMGICIQQWENYTCDCSMTSYTGTHCN) is the EGF-like 3 domain. Positions 1114–1314 (TTYIFGKGGG…NPNIKINGSV (201 aa)) constitute a Laminin G-like 6 domain. Disordered regions lie at residues 1345–1366 (TMST…TDDM), 1442–1479 (LSDG…NLPP), and 1520–1557 (PNKV…KMNH). A compositionally biased stretch (acidic residues) spans 1446 to 1461 (GSDDCGDDDDDDDDDG). Residues 1527 to 1547 (GRTTTASFSPKLSRSTTTSTP) are compositionally biased toward polar residues. The helical transmembrane segment at 1623–1643 (GMVVGIVAAAALCILILLYAM) threads the bilayer. The Cytoplasmic segment spans residues 1644–1697 (YKYRNRDEGSYQVDETRNYITNSAQSNGAVMKDKQQSTKSGNKKQKNKDKEYYV). Residues 1665–1697 (NSAQSNGAVMKDKQQSTKSGNKKQKNKDKEYYV) are disordered.

The protein belongs to the neurexin family.

The protein localises to the membrane. Its function is as follows. Neuronal cell surface protein that may be involved in cell recognition and cell adhesion. The chain is Neurexin-3a (nrxn3a) from Danio rerio (Zebrafish).